The following is a 134-amino-acid chain: MAIKPVAHKKIIKKRTKKFVRFESEDFAKLDSSWRRPRGIDNRVRRRFRGQRRMAKIGFASDAATKHLLPNGFKKFLIRNPADLEILLMNNRTYCGEIAHNISAQVKAALVKRAAELGVRLTNANAKVKVQESA.

It belongs to the eukaryotic ribosomal protein eL32 family.

The sequence is that of Large ribosomal subunit protein eL32 (RPL32) from Tetrahymena thermophila (strain SB210).